Reading from the N-terminus, the 546-residue chain is 2-succinyl-5-enolpyruvyl-6-hydroxy-3-cyclohexene-1-carboxylate synthase (546 aa).

The protein belongs to the TPP enzyme family. MenD subfamily. Homodimer. The cofactor is Mg(2+). Mn(2+) serves as cofactor. Requires thiamine diphosphate as cofactor.

It catalyses the reaction isochorismate + 2-oxoglutarate + H(+) = 5-enolpyruvoyl-6-hydroxy-2-succinyl-cyclohex-3-ene-1-carboxylate + CO2. The protein operates within quinol/quinone metabolism; 1,4-dihydroxy-2-naphthoate biosynthesis; 1,4-dihydroxy-2-naphthoate from chorismate: step 2/7. It participates in quinol/quinone metabolism; menaquinone biosynthesis. Its function is as follows. Catalyzes the thiamine diphosphate-dependent decarboxylation of 2-oxoglutarate and the subsequent addition of the resulting succinic semialdehyde-thiamine pyrophosphate anion to isochorismate to yield 2-succinyl-5-enolpyruvyl-6-hydroxy-3-cyclohexene-1-carboxylate (SEPHCHC). The polypeptide is 2-succinyl-5-enolpyruvyl-6-hydroxy-3-cyclohexene-1-carboxylate synthase (Mycolicibacterium smegmatis (strain ATCC 700084 / mc(2)155) (Mycobacterium smegmatis)).